A 319-amino-acid chain; its full sequence is Capsid protein (319 aa).

The protein resides in the virion. Its function is as follows. The capsid protein self-assembles to form an icosahedral capsid with a T=2 symmetry made of 120 subunits. This chain is Capsid protein, found in Cryptosporidium parvum virus 1 (strain KSU-1).